The sequence spans 952 residues: Eukaryotic translation initiation factor 3 subunit A (952 aa).

In terms of domain architecture, PCI spans 315–491 (HAERAGIVND…QTITFVSTPP (177 aa)). Residues 522 to 849 (DAFAAAIAQA…RRQAEKAAAT (328 aa)) adopt a coiled-coil conformation. Residues 757–797 (EKVIKRKREEKERKLKEAREAEERKRKEEEEAAQKAEEEAR) show a composition bias toward basic and acidic residues. The segment at 757–952 (EKVIKRKREE…RGMPSTRGGA (196 aa)) is disordered. The segment covering 798-809 (AAAALEAEAAAA) has biased composition (low complexity). Basic and acidic residues predominate over residues 810-844 (EQRRAEREAQRQSDLERIRAQQEREEEALRRRQAE). Low complexity-rich tracts occupy residues 856–878 (RPPA…GGPS) and 893–918 (GAPV…SNGP).

This sequence belongs to the eIF-3 subunit A family. In terms of assembly, component of the eukaryotic translation initiation factor 3 (eIF-3) complex.

The protein localises to the cytoplasm. Its function is as follows. RNA-binding component of the eukaryotic translation initiation factor 3 (eIF-3) complex, which is involved in protein synthesis of a specialized repertoire of mRNAs and, together with other initiation factors, stimulates binding of mRNA and methionyl-tRNAi to the 40S ribosome. The eIF-3 complex specifically targets and initiates translation of a subset of mRNAs involved in cell proliferation. This chain is Eukaryotic translation initiation factor 3 subunit A, found in Cryptococcus neoformans var. neoformans serotype D (strain B-3501A) (Filobasidiella neoformans).